We begin with the raw amino-acid sequence, 350 residues long: Twinfilin-1 (350 aa).

At Ser-2 the chain carries N-acetylserine. Residues 2-139 (SHQTGIQASE…SLHGYRKYLL (138 aa)) form the ADF-H 1 domain. Phosphoserine occurs at positions 143 and 277. The region spanning 175–313 (LQGVAFPISR…TADFLYDEVH (139 aa)) is the ADF-H 2 domain. At Tyr-309 the chain carries Phosphotyrosine. The disordered stretch occupies residues 316–350 (QHAHKQSFAKPKGPAGKRGIRRLIRGPAEAEATTD). A Phosphothreonine modification is found at Thr-349.

It belongs to the actin-binding proteins ADF family. Twinfilin subfamily. As to quaternary structure, interacts with G-actin; ADP-actin form and capping protein (CP). May also be able to interact with TWF2 and phosphoinositides, PI(4,5)P2. When bound to PI(4,5)P2, it is down-regulated. Interacts with ACTG1. Post-translationally, phosphorylated on serine and threonine residues.

The protein resides in the cytoplasm. It is found in the cytoskeleton. Actin-binding protein involved in motile and morphological processes. Inhibits actin polymerization, likely by sequestering G-actin. By capping the barbed ends of filaments, it also regulates motility. Seems to play an important role in clathrin-mediated endocytosis and distribution of endocytic organelles. The chain is Twinfilin-1 (Twf1) from Rattus norvegicus (Rat).